Consider the following 472-residue polypeptide: Transmembrane protein 8B (472 aa).

Low complexity predominate over residues 1-10; the sequence is MNMPQSLGTQ. Residues 1-24 are disordered; the sequence is MNMPQSLGTQPLPPEPPSLGTPIE. Residues 1–233 are Extracellular-facing; the sequence is MNMPQSLGTQ…ADALTYGFQL (233 aa). A glycan (N-linked (GlcNAc...) asparagine) is linked at Asn-100. The EGF-like domain maps to 182-221; that stretch reads FLSPCVDDCGPYGQCKLLRTHNYLYAACECKAGWRGWGCT. 3 cysteine pairs are disulfide-bonded: Cys-186–Cys-196, Cys-190–Cys-209, and Cys-211–Cys-220. A helical membrane pass occupies residues 234 to 254; it reads LSTLLLCLSNLMFLPPVVLAI. Over 255–257 the chain is Cytoplasmic; the sequence is RSR. Residues 258–277 traverse the membrane as a helical segment; that stretch reads YVLEAAVYTFTMFFSTFYHA. Residues 278-292 lie on the Extracellular side of the membrane; it reads CDQPGIVVFCIMDYD. Residues 293–313 traverse the membrane as a helical segment; the sequence is VLQFCDFLGSLMSVWVTVIAM. The Cytoplasmic segment spans residues 314-315; it reads AR. The chain crosses the membrane as a helical span at residues 316–336; that stretch reads LQPVIKQVLYLLGAMLLSMAL. The Extracellular portion of the chain corresponds to 337-342; it reads QLDRHG. Residues 343-363 form a helical membrane-spanning segment; the sequence is LWNLLGPSLFALGILATAWTV. The Cytoplasmic segment spans residues 364-379; sequence RSVRRRHCYPPTWRRW. A helical membrane pass occupies residues 380 to 400; it reads LFYLCPGSLIAGSAVLLYAFV. Over 401–405 the chain is Extracellular; that stretch reads ETRDN. Residues 406–426 form a helical membrane-spanning segment; it reads YFYIHSIWHMLIAGSVGFLLP. The Cytoplasmic portion of the chain corresponds to 427 to 472; it reads PRAKTDRRVPSGARARGCGYQLCINEQEELGLVGPGGTTVSSICVS.

This sequence belongs to the TMEM8 family. In terms of assembly, may interact with EZR. Post-translationally, N-glycosylated.

The protein localises to the cell membrane. Its subcellular location is the cytoplasm. It localises to the nucleus. The protein resides in the mitochondrion. It is found in the endoplasmic reticulum. In terms of biological role, may function as a regulator of the EGFR pathway. Probable tumor suppressor which may function in cell growth, proliferation and adhesion. This is Transmembrane protein 8B (Tmem8b) from Mus musculus (Mouse).